Here is a 509-residue protein sequence, read N- to C-terminus: Seipin-3 (509 aa).

Positions Y33 to V73 are disordered. The span at D52–S63 shows a compositional bias: low complexity. 2 consecutive transmembrane segments (helical) span residues L238–I258 and L455–F475.

Belongs to the seipin family. Expressed in seeds, seedlings, leaves, stems and roots. Not detected in flowers.

It is found in the endoplasmic reticulum membrane. In terms of biological role, involved in lipid metabolism and lipid droplet (LD) morphology, number, and size. Supports the formation of small-sized LDs and modulates triacylglycerol accumulation. Induces probably a reorganization of the endoplasmic reticulum into LD-forming domains. In Arabidopsis thaliana (Mouse-ear cress), this protein is Seipin-3.